A 348-amino-acid polypeptide reads, in one-letter code: Histidinol-phosphate aminotransferase (348 aa).

The tract at residues 1–31 (MLPTRDCVRQTPAYTPGEQPQTAGFTKLNTN) is disordered. A compositionally biased stretch (polar residues) spans 18-31 (EQPQTAGFTKLNTN). An N6-(pyridoxal phosphate)lysine modification is found at Lys207.

Belongs to the class-II pyridoxal-phosphate-dependent aminotransferase family. Histidinol-phosphate aminotransferase subfamily. Homodimer. It depends on pyridoxal 5'-phosphate as a cofactor.

The enzyme catalyses L-histidinol phosphate + 2-oxoglutarate = 3-(imidazol-4-yl)-2-oxopropyl phosphate + L-glutamate. Its pathway is amino-acid biosynthesis; L-histidine biosynthesis; L-histidine from 5-phospho-alpha-D-ribose 1-diphosphate: step 7/9. The polypeptide is Histidinol-phosphate aminotransferase (Microcystis aeruginosa (strain NIES-843 / IAM M-2473)).